The sequence spans 288 residues: 4-diphosphocytidyl-2-C-methyl-D-erythritol kinase (288 aa).

The active site involves Lys-8. 90–100 (PFGAGLGGGSS) lines the ATP pocket. The active site involves Asp-132.

This sequence belongs to the GHMP kinase family. IspE subfamily.

The catalysed reaction is 4-CDP-2-C-methyl-D-erythritol + ATP = 4-CDP-2-C-methyl-D-erythritol 2-phosphate + ADP + H(+). It participates in isoprenoid biosynthesis; isopentenyl diphosphate biosynthesis via DXP pathway; isopentenyl diphosphate from 1-deoxy-D-xylulose 5-phosphate: step 3/6. Catalyzes the phosphorylation of the position 2 hydroxy group of 4-diphosphocytidyl-2C-methyl-D-erythritol. This Chlorobium chlorochromatii (strain CaD3) protein is 4-diphosphocytidyl-2-C-methyl-D-erythritol kinase.